We begin with the raw amino-acid sequence, 131 residues long: Profilin (131 aa).

A disulfide bridge links Cys-13 with Cys-115. Positions 81 to 97 (AVIRGKKGSGGVTVKKT) match the Involved in PIP2 interaction motif. Thr-111 is subject to Phosphothreonine.

The protein belongs to the profilin family. As to quaternary structure, occurs in many kinds of cells as a complex with monomeric actin in a 1:1 ratio.

The protein localises to the cytoplasm. The protein resides in the cytoskeleton. Functionally, binds to actin and affects the structure of the cytoskeleton. At high concentrations, profilin prevents the polymerization of actin, whereas it enhances it at low concentrations. The sequence is that of Profilin from Phoenix dactylifera (Date palm).